The following is a 111-amino-acid chain: MIQVLLVTICLAVFPYQGSSIILESGNVNDYEVVYPRKITPLPKGAVQPKNPCCDAATCKLTPGSQCAEGLCCDQCKFIKAGKICRRARGDNPDYRCTGQSGDCPRKHFYA.

An N-terminal signal peptide occupies residues 1-20 (MIQVLLVTICLAVFPYQGSS). Residues 21–44 (IILESGNVNDYEVVYPRKITPLPK) constitute a propeptide that is removed on maturation. In terms of domain architecture, Disintegrin spans 45–111 (GAVQPKNPCC…GDCPRKHFYA (67 aa)). 4 cysteine pairs are disulfide-bonded: Cys-53/Cys-76, Cys-67/Cys-73, Cys-72/Cys-97, and Cys-85/Cys-104. The Cell attachment site signature appears at 89-91 (RGD). The propeptide occupies 110-111 (YA).

The protein belongs to the disintegrin family. Dimeric disintegrin subfamily. Heterodimer with piscivostatin-beta; disulfide-linked. As to expression, expressed by the venom gland.

Its subcellular location is the secreted. In terms of biological role, inhibits fibrinogen interaction with platelets. Acts by binding to alpha-IIb/beta-3 (ITGA2B/ITGB3) on the platelet surface and inhibits both ADP-induced platelet aggregation and platelet aggregate dissociation in human platelet-rich plasma. The protein is Disintegrin piscivostatin-alpha of Agkistrodon piscivorus piscivorus (Eastern cottonmouth).